The primary structure comprises 672 residues: DNA ligase (672 aa).

Residues 32 to 36 (DSEYD), 81 to 82 (SL), and E114 contribute to the NAD(+) site. The active-site N6-AMP-lysine intermediate is K116. 4 residues coordinate NAD(+): R137, E174, K291, and K315. Zn(2+)-binding residues include C409, C412, C427, and C433. Residues 592–672 (VNENPFKEKT…EFLEIVNSFS (81 aa)) form the BRCT domain.

It belongs to the NAD-dependent DNA ligase family. LigA subfamily. Mg(2+) serves as cofactor. Mn(2+) is required as a cofactor.

It carries out the reaction NAD(+) + (deoxyribonucleotide)n-3'-hydroxyl + 5'-phospho-(deoxyribonucleotide)m = (deoxyribonucleotide)n+m + AMP + beta-nicotinamide D-nucleotide.. Functionally, DNA ligase that catalyzes the formation of phosphodiester linkages between 5'-phosphoryl and 3'-hydroxyl groups in double-stranded DNA using NAD as a coenzyme and as the energy source for the reaction. It is essential for DNA replication and repair of damaged DNA. The chain is DNA ligase from Actinobacillus succinogenes (strain ATCC 55618 / DSM 22257 / CCUG 43843 / 130Z).